Consider the following 102-residue polypeptide: Thioredoxin (102 aa).

A Thioredoxin domain is found at 1–102; it reads MVKIISSENF…FLTNLINKHA (102 aa). Cysteines 28 and 31 form a disulfide.

Belongs to the thioredoxin family.

Functionally, participates in various redox reactions through the reversible oxidation of its active center dithiol to a disulfide and catalyzes dithiol-disulfide exchange reactions. The sequence is that of Thioredoxin (trxA) from Chlamydia pneumoniae (Chlamydophila pneumoniae).